The following is an 892-amino-acid chain: Alanine--tRNA ligase (892 aa).

Zn(2+) is bound by residues histidine 580, histidine 584, cysteine 682, and histidine 686.

The protein belongs to the class-II aminoacyl-tRNA synthetase family. Requires Zn(2+) as cofactor.

It localises to the cytoplasm. The catalysed reaction is tRNA(Ala) + L-alanine + ATP = L-alanyl-tRNA(Ala) + AMP + diphosphate. In terms of biological role, catalyzes the attachment of alanine to tRNA(Ala) in a two-step reaction: alanine is first activated by ATP to form Ala-AMP and then transferred to the acceptor end of tRNA(Ala). Also edits incorrectly charged Ser-tRNA(Ala) and Gly-tRNA(Ala) via its editing domain. This Salinispora tropica (strain ATCC BAA-916 / DSM 44818 / JCM 13857 / NBRC 105044 / CNB-440) protein is Alanine--tRNA ligase.